Consider the following 723-residue polypeptide: Catalase-peroxidase (723 aa).

The tryptophyl-tyrosyl-methioninium (Trp-Tyr) (with M-251) cross-link spans 97–225; that stretch reads WHAAGSYRVT…LAAVQMGLIY (129 aa). His98 serves as the catalytic Proton acceptor. A cross-link (tryptophyl-tyrosyl-methioninium (Tyr-Met) (with W-97)) is located at residues 225 to 251; sequence YVNPEGVNGKSDPLATAAQMRETFARM. His266 provides a ligand contact to heme b.

The protein belongs to the peroxidase family. Peroxidase/catalase subfamily. In terms of assembly, homodimer or homotetramer. Requires heme b as cofactor. Formation of the three residue Trp-Tyr-Met cross-link is important for the catalase, but not the peroxidase activity of the enzyme.

It catalyses the reaction H2O2 + AH2 = A + 2 H2O. It carries out the reaction 2 H2O2 = O2 + 2 H2O. Its function is as follows. Bifunctional enzyme with both catalase and broad-spectrum peroxidase activity. Involved in tumorigenesis. This chain is Catalase-peroxidase, found in Rhizobium radiobacter (Agrobacterium tumefaciens).